Here is a 140-residue protein sequence, read N- to C-terminus: ATP synthase epsilon chain (140 aa).

The protein belongs to the ATPase epsilon chain family. In terms of assembly, F-type ATPases have 2 components, CF(1) - the catalytic core - and CF(0) - the membrane proton channel. CF(1) has five subunits: alpha(3), beta(3), gamma(1), delta(1), epsilon(1). CF(0) has three main subunits: a, b and c.

The protein localises to the cell inner membrane. In terms of biological role, produces ATP from ADP in the presence of a proton gradient across the membrane. The polypeptide is ATP synthase epsilon chain (Yersinia enterocolitica serotype O:8 / biotype 1B (strain NCTC 13174 / 8081)).